Here is a 185-residue protein sequence, read N- to C-terminus: TATA-box-binding protein 3 (185 aa).

2 tandem repeats follow at residues 7–84 (IENV…ANTL) and 100–178 (VQNI…KTEF).

The protein belongs to the TBP family.

Its function is as follows. General factor that plays a role in the activation of archaeal genes transcribed by RNA polymerase. Binds specifically to the TATA box promoter element which lies close to the position of transcription initiation. The chain is TATA-box-binding protein 3 from Methanosarcina mazei (strain ATCC BAA-159 / DSM 3647 / Goe1 / Go1 / JCM 11833 / OCM 88) (Methanosarcina frisia).